The sequence spans 350 residues: Biotin synthase (350 aa).

A Radical SAM core domain is found at 38–265 (NHVQVSTLLS…MSAVRLSAGR (228 aa)). [4Fe-4S] cluster is bound by residues cysteine 53, cysteine 57, and cysteine 60. [2Fe-2S] cluster is bound by residues cysteine 97, cysteine 128, cysteine 188, and arginine 260.

Belongs to the radical SAM superfamily. Biotin synthase family. As to quaternary structure, homodimer. [4Fe-4S] cluster is required as a cofactor. It depends on [2Fe-2S] cluster as a cofactor.

The catalysed reaction is (4R,5S)-dethiobiotin + (sulfur carrier)-SH + 2 reduced [2Fe-2S]-[ferredoxin] + 2 S-adenosyl-L-methionine = (sulfur carrier)-H + biotin + 2 5'-deoxyadenosine + 2 L-methionine + 2 oxidized [2Fe-2S]-[ferredoxin]. It functions in the pathway cofactor biosynthesis; biotin biosynthesis; biotin from 7,8-diaminononanoate: step 2/2. Functionally, catalyzes the conversion of dethiobiotin (DTB) to biotin by the insertion of a sulfur atom into dethiobiotin via a radical-based mechanism. This is Biotin synthase from Vibrio atlanticus (strain LGP32) (Vibrio splendidus (strain Mel32)).